A 336-amino-acid chain; its full sequence is 3-hydroxyisobutyrate dehydrogenase, mitochondrial (336 aa).

The N-terminal 36 residues, 1 to 36, are a transit peptide targeting the mitochondrion; sequence MAASLRLLGAASGLRYWSRRLRPAAGSFAAVCSRSV. 40-68 lines the NAD(+) pocket; that stretch reads TPVGFIGLGNMGNPMAKNLMKHGYPLIIY. An N6-acetyllysine; alternate mark is found at Lys-60 and Lys-76. An N6-succinyllysine; alternate mark is found at Lys-60 and Lys-76. Residue Lys-95 is modified to N6-succinyllysine. NAD(+) contacts are provided by residues 103 to 104 and Asn-108; that span reads LP. At Lys-121 the chain carries N6-acetyllysine. Position 134 (Thr-134) interacts with NAD(+). The residue at position 141 (Lys-141) is an N6-succinyllysine. Lys-145 is subject to N6-acetyllysine. An N6-acetyllysine; alternate modification is found at Lys-149. Lys-149 is subject to N6-succinyllysine; alternate. Lys-209 is a catalytic residue. 2 positions are modified to N6-acetyllysine; alternate: Lys-238 and Lys-242. 2 positions are modified to N6-succinyllysine; alternate: Lys-238 and Lys-242. Lys-284 contributes to the NAD(+) binding site. At Lys-297 the chain carries N6-succinyllysine. Lys-321 carries the N6-acetyllysine; alternate modification. Position 321 is an N6-succinyllysine; alternate (Lys-321).

Belongs to the HIBADH-related family. 3-hydroxyisobutyrate dehydrogenase subfamily. As to quaternary structure, homodimer. Detected in skin fibroblasts.

It is found in the mitochondrion. It carries out the reaction 3-hydroxy-2-methylpropanoate + NAD(+) = 2-methyl-3-oxopropanoate + NADH + H(+). Its pathway is amino-acid degradation; L-valine degradation. This chain is 3-hydroxyisobutyrate dehydrogenase, mitochondrial (HIBADH), found in Homo sapiens (Human).